Reading from the N-terminus, the 435-residue chain is Monodictyphenone cluster transcription factor (435 aa).

The zn(2)-C6 fungal-type DNA-binding region spans Cys23–Cys50. The segment at Gln117–Thr147 is disordered. Residues Pro130–Thr147 are compositionally biased toward low complexity.

It localises to the nucleus. Transcription factor that regulates the expression of the gene cluster that mediates the biosynthesis of monodictyphenone, a prenyl xanthone derivative. This Emericella nidulans (strain FGSC A4 / ATCC 38163 / CBS 112.46 / NRRL 194 / M139) (Aspergillus nidulans) protein is Monodictyphenone cluster transcription factor.